Here is a 407-residue protein sequence, read N- to C-terminus: Protein ATC1/LIC4 (407 aa).

Its subcellular location is the cytoplasm. The protein resides in the nucleus. In terms of biological role, involved in cation homeostasis and in the regulation of the cation stress signaling cascades. In Eremothecium gossypii (strain ATCC 10895 / CBS 109.51 / FGSC 9923 / NRRL Y-1056) (Yeast), this protein is Protein ATC1/LIC4 (ATC1).